Here is a 729-residue protein sequence, read N- to C-terminus: Neurochondrin (729 aa).

The residue at position 2 (serine 2) is an N-acetylserine. Phosphoserine is present on serine 2. Serine 2 bears the N-acetylalanine mark. 2 S-palmitoyl cysteine lipidation sites follow: cysteine 3 and cysteine 4. Position 75 is an asymmetric dimethylarginine (arginine 75). At serine 448 the chain carries Phosphoserine.

It belongs to the neurochondrin family. As to quaternary structure, interacts with MCHR1. Interacts with SEMA4C. Interacts with DIAPH1 (via FH3 domain). Interacts with GRM5. Palmitoylated. Palmitoylation by ZDHHC1, ZDHHC3 and ZDHHC11 regulates the association of NCDN with endosome membranes. May also be palmitoylated by ZDHHC7. In terms of tissue distribution, abundantly expressed in whole adult brain and in all individual brain regions examined, including spinal cord. Weakly expressed in ovary, testis, fetal brain and small intestine.

Its subcellular location is the cytoplasm. The protein localises to the cytosol. The protein resides in the endosome membrane. It localises to the cell projection. It is found in the dendrite. Its subcellular location is the postsynapse. Functionally, probably involved in signal transduction in the nervous system, via increasing cell surface localization of GRM5/mGluR5 and positively regulating its signaling. Required for the spatial learning process. Acts as a negative regulator of Ca(2+)-calmodulin-dependent protein kinase 2 (CaMK2) phosphorylation. May play a role in modulating melanin-concentrating hormone-mediated functions via its interaction with MCHR1 that interferes with G protein-coupled signal transduction. May be involved in bone metabolism. May also be involved in neurite outgrowth. The protein is Neurochondrin of Homo sapiens (Human).